The following is a 661-amino-acid chain: Probable potassium transport system protein Kup 1 (661 aa).

The span at 1–11 (MKGLFPAGGGN) shows a compositional bias: gly residues. The disordered stretch occupies residues 1-38 (MKGLFPAGGGNPPSSYLSRFLPHRKERSPENVTSGRNG). 12 helical membrane passes run 48–68 (LALG…LYTI), 85–105 (IMGV…IKYI), 139–159 (AVVV…GFIT), 177–197 (AAKN…FLVQ), 207–227 (IFGP…LLCI), 251–271 (VHGL…EALY), 286–306 (WFAM…AALL), 324–344 (LLLP…QAMI), 384–404 (LMMV…GLAG), 405–425 (AYGV…FFVA), 436–456 (TAPL…SNLL), and 458–478 (FFDG…VMAS).

Belongs to the HAK/KUP transporter (TC 2.A.72) family.

The protein localises to the cell inner membrane. It carries out the reaction K(+)(in) + H(+)(in) = K(+)(out) + H(+)(out). Functionally, transport of potassium into the cell. Likely operates as a K(+):H(+) symporter. This chain is Probable potassium transport system protein Kup 1, found in Syntrophobacter fumaroxidans (strain DSM 10017 / MPOB).